Here is a 1103-residue protein sequence, read N- to C-terminus: Mediator of RNA polymerase II transcription subunit 14 (1103 aa).

Disordered regions lie at residues 1–63 (MPGV…GYKQ), 120–140 (VPPQDSGPLPGAPNGKPLGNQ), and 1054–1103 (LETK…ITID). Over residues 1073–1103 (SGNTVQNARLENKSPQKAAATHSNADVITID) the composition is skewed to polar residues.

Belongs to the Mediator complex subunit 14 family. Component of the Mediator complex.

It is found in the nucleus. In terms of biological role, component of the Mediator complex, a coactivator involved in the regulated transcription of nearly all RNA polymerase II-dependent genes. Mediator functions as a bridge to convey information from gene-specific regulatory proteins to the basal RNA polymerase II transcription machinery. Mediator is recruited to promoters by direct interactions with regulatory proteins and serves as a scaffold for the assembly of a functional preinitiation complex with RNA polymerase II and the general transcription factors. This chain is Mediator of RNA polymerase II transcription subunit 14 (rgr1), found in Aspergillus terreus (strain NIH 2624 / FGSC A1156).